The sequence spans 466 residues: tRNA(Ile)-lysidine synthase (466 aa).

42 to 47 (SGGVDS) is an ATP binding site.

Belongs to the tRNA(Ile)-lysidine synthase family.

The protein localises to the cytoplasm. The enzyme catalyses cytidine(34) in tRNA(Ile2) + L-lysine + ATP = lysidine(34) in tRNA(Ile2) + AMP + diphosphate + H(+). Ligates lysine onto the cytidine present at position 34 of the AUA codon-specific tRNA(Ile) that contains the anticodon CAU, in an ATP-dependent manner. Cytidine is converted to lysidine, thus changing the amino acid specificity of the tRNA from methionine to isoleucine. The polypeptide is tRNA(Ile)-lysidine synthase (Anaplasma marginale (strain St. Maries)).